Reading from the N-terminus, the 645-residue chain is MKVGVIETHHSHPIIPSVVVQDTSEDPGLIEKGENRFARQWYLPGAFAQYNINNNSNKDEEKKKKKEKKSKSENKKDGERQKNKEKKEKHKNKDKKKGKEEEKKKDIFIIDPAGNMYYNWLFCITMPVMYNWTMIIARACFDELQNDYLAVWFIVDYVSDVIYIADMFVRTRTGYLEQGLLVKEEQKLKEKYKSSLQFKLDFLSIIPTDLLYFKLGLNYPELRINRLLRVARMFEFFQRTETRTNYPNIFRISNLVMYIVIIIHWNACVYYSISKAIGFGADTWVYPNTSHPEFARLTRKYVYSLYWSTLTLTTIGETPPPVRDSEYFFVVVDFLVGVLIFATIVGNVGSMISNMNAARAEFQAKIDAIKQYMHFRNVSKDMEKRVIKWFDYLWTNKKAVDEREVLKYLPDKLRAEIAINVHLETLKKVRIFADCEAGLLVELVLKLQPQVYSPGDYICRKGDIGREMYIIKEGKLAVVADDGVTQFVVLSDGSYFGEISILNIKGSKAGNRRTANIRSIGYSDLFCLSKDDLMEALTEYPDAKAMLEEKGKQILMKDGLLDIEVANLGSDPKDLEEKVAYMEGSMDRLQTKFARLLAEYDAAQQKLKKRLTQIEKILKPVMEQEFLDFEEADPPTDKPGVTKTE.

Topologically, residues 1 to 121 (MKVGVIETHH…PAGNMYYNWL (121 aa)) are cytoplasmic. Residues 53–100 (NNNSNKDEEKKKKKEKKSKSENKKDGERQKNKEKKEKHKNKDKKKGKE) are disordered. A compositionally biased stretch (basic and acidic residues) spans 70–86 (SKSENKKDGERQKNKEK). Basic residues predominate over residues 87–96 (KEKHKNKDKK). The helical transmembrane segment at 122–143 (FCITMPVMYNWTMIIARACFDE) threads the bilayer. At 144 to 153 (LQNDYLAVWF) the chain is on the extracellular side. Residues 154–174 (IVDYVSDVIYIADMFVRTRTG) form a helical membrane-spanning segment. Over 175-199 (YLEQGLLVKEEQKLKEKYKSSLQFK) the chain is Cytoplasmic. Residues 200–218 (LDFLSIIPTDLLYFKLGLN) form a helical membrane-spanning segment. Topologically, residues 219 to 223 (YPELR) are extracellular. Residues 224–242 (INRLLRVARMFEFFQRTET) traverse the membrane as a helical segment. Residues 243–249 (RTNYPNI) are Cytoplasmic-facing. The chain crosses the membrane as a helical span at residues 250 to 273 (FRISNLVMYIVIIIHWNACVYYSI). Topologically, residues 274 to 296 (SKAIGFGADTWVYPNTSHPEFAR) are extracellular. 2 helical membrane-spanning segments follow: residues 297–331 (LTRK…FFVV) and 332–356 (VDFL…SNMN). Residues 357 to 645 (AARAEFQAKI…TDKPGVTKTE (289 aa)) are Cytoplasmic-facing. 3',5'-cyclic GMP-binding positions include 439-561 (LLVE…DGLL), Glu-498, and Arg-513.

It belongs to the cyclic nucleotide-gated cation channel (TC 1.A.1.5) family.

The protein localises to the membrane. Visual signal transduction is mediated by a G-protein coupled cascade using cGMP as second messenger. This protein can be activated by cGMP which leads to an opening of the cation channel and thereby causing a depolarization of rod photoreceptors. This Gallus gallus (Chicken) protein is Cyclic nucleotide-gated channel rod photoreceptor subunit alpha.